A 413-amino-acid chain; its full sequence is PAB1-binding protein 2 (413 aa).

Residues 1-23 (MSTETTKPSITTTPTTVLVSPNT) are compositionally biased toward low complexity. Residues 1–36 (MSTETTKPSITTTPTTVLVSPNTLKRKKGEDTSEEQ) form a disordered region. 3 consecutive KH domains span residues 66 to 130 (DVHL…YGMI), 148 to 213 (EISI…TFYI), and 330 to 394 (FVQQ…IMLI).

Interacts with PAB1.

It localises to the nucleus. This Saccharomyces cerevisiae (strain ATCC 204508 / S288c) (Baker's yeast) protein is PAB1-binding protein 2 (PBP2).